A 78-amino-acid polypeptide reads, in one-letter code: Large ribosomal subunit protein bL28 (78 aa).

Positions 1-22 (MAKVCQVTGKRPVTGHNVSHAK) are disordered.

It belongs to the bacterial ribosomal protein bL28 family.

The protein is Large ribosomal subunit protein bL28 of Teredinibacter turnerae (strain ATCC 39867 / T7901).